Reading from the N-terminus, the 1116-residue chain is Protein translocase subunit SecA (1116 aa).

ATP contacts are provided by residues Q177, 195–199 (GEGKT), and D692.

Belongs to the SecA family. In terms of assembly, monomer and homodimer. Part of the essential Sec protein translocation apparatus which comprises SecA, SecYEG and auxiliary proteins SecDF. Other proteins may also be involved.

The protein localises to the cell inner membrane. The protein resides in the cytoplasm. The enzyme catalyses ATP + H2O + cellular proteinSide 1 = ADP + phosphate + cellular proteinSide 2.. Its function is as follows. Part of the Sec protein translocase complex. Interacts with the SecYEG preprotein conducting channel. Has a central role in coupling the hydrolysis of ATP to the transfer of proteins into and across the cell membrane, serving as an ATP-driven molecular motor driving the stepwise translocation of polypeptide chains across the membrane. The polypeptide is Protein translocase subunit SecA (Flavobacterium psychrophilum (strain ATCC 49511 / DSM 21280 / CIP 103535 / JIP02/86)).